Consider the following 375-residue polypeptide: GDSL esterase/lipase At5g45960 (375 aa).

A signal peptide spans 1-28 (MRSHHRHFSSYVSFILFLFLFFISFSSS). The active-site Nucleophile is the S54. The N-linked (GlcNAc...) asparagine glycan is linked to N340. Active-site residues include D348 and H351.

Belongs to the 'GDSL' lipolytic enzyme family.

Its subcellular location is the secreted. This is GDSL esterase/lipase At5g45960 from Arabidopsis thaliana (Mouse-ear cress).